The chain runs to 536 residues: Membrane protein insertase YidC (536 aa).

A helical membrane pass occupies residues 5 to 25; it reads ALIAVILSIVFFYGYSALFPP. Residues 30 to 54 are disordered; the sequence is APAPSAQQAVTGSQPGAPQASVAAV. A compositionally biased stretch (low complexity) spans 31–54; it reads PAPSAQQAVTGSQPGAPQASVAAV. A run of 4 helical transmembrane segments spans residues 350–370, 420–440, 454–474, and 494–514; these read YGIAIIIITVILKIIFYPLTH, LPMLVQIPVFFALYKALMFSI, LAGKDPYYVTPIIMGITMVIQ, and PVVFTFMFLNFPSGLVLYWLV.

Belongs to the OXA1/ALB3/YidC family. Type 1 subfamily. In terms of assembly, interacts with the Sec translocase complex via SecD. Specifically interacts with transmembrane segments of nascent integral membrane proteins during membrane integration.

It localises to the cell inner membrane. In terms of biological role, required for the insertion and/or proper folding and/or complex formation of integral membrane proteins into the membrane. Involved in integration of membrane proteins that insert both dependently and independently of the Sec translocase complex, as well as at least some lipoproteins. Aids folding of multispanning membrane proteins. The sequence is that of Membrane protein insertase YidC from Geobacter metallireducens (strain ATCC 53774 / DSM 7210 / GS-15).